The sequence spans 881 residues: Glutamate--tRNA ligase (881 aa).

The tract at residues 1–480 (MSVRVRLAPS…ILRFKKSIGQ (480 aa)) is glutamyl-tRNA synthetase. Positions 9–19 (PSPTGNLHIGT) match the 'HIGH' region motif. The short motif at 248 to 252 (KLSKR) is the 'KMSKS' region element. Lys251 is an ATP binding site. The interval 481 to 881 (EIEDTKIEDT…IKREIFGKPS (401 aa)) is unknown. Basic and acidic residues predominate over residues 488 to 502 (EDTKKAETTPHKSKG). The disordered stretch occupies residues 488-747 (EDTKKAETTP…PTATDAETRE (260 aa)). Positions 522 to 548 (QTQTTKPPKKGQTATPVATTPTATDVT) are enriched in low complexity. A compositionally biased stretch (polar residues) spans 549–562 (ENTSVGTQETQSQI). Residues 563–576 (TTPVATTPTATDVT) show a composition bias toward low complexity. Positions 577-590 (ENTSVGTQETQSQI) are enriched in polar residues. The span at 591 to 604 (TTPVATTPTATDVT) shows a compositional bias: low complexity. The segment covering 605 to 618 (ENTSVETQETQSQI) has biased composition (polar residues). Low complexity predominate over residues 619-632 (TTPVATTPTATDVT). Polar residues predominate over residues 633 to 646 (ENTSVETQETQSQI). Residues 647–660 (TTPVATTPTATDVT) show a composition bias toward low complexity. Polar residues predominate over residues 661–674 (ENTSVGTQETQSQI). Low complexity predominate over residues 675–688 (TTPVATTPTATDVT). The segment covering 689–702 (ENTSVETQETQSQI) has biased composition (polar residues). Residues 703–720 (TTPVATTSTATDVTENTS) are compositionally biased toward low complexity. The span at 721-730 (VETQETQSQI) shows a compositional bias: polar residues. Low complexity predominate over residues 731–742 (TTPVATTPTATD). 2 helical membrane-spanning segments follow: residues 809-829 (LFGW…VIEA) and 832-852 (GIPI…VWFV).

This sequence belongs to the class-I aminoacyl-tRNA synthetase family. Glutamate--tRNA ligase type 1 subfamily. In terms of assembly, monomer.

It is found in the cytoplasm. Its subcellular location is the cell membrane. It carries out the reaction tRNA(Glu) + L-glutamate + ATP = L-glutamyl-tRNA(Glu) + AMP + diphosphate. Catalyzes the attachment of glutamate to tRNA(Glu) in a two-step reaction: glutamate is first activated by ATP to form Glu-AMP and then transferred to the acceptor end of tRNA(Glu). This Trichodesmium erythraeum (strain IMS101) protein is Glutamate--tRNA ligase (gltX).